A 192-amino-acid polypeptide reads, in one-letter code: Probable GTP-binding protein EngB (192 aa).

Positions 22–192 (NLPQIVIVGR…QVLSIFEKYA (171 aa)) constitute an EngB-type G domain. GTP-binding positions include 30 to 37 (GRSNVGKS), 57 to 61 (GKTRG), 75 to 78 (DLPG), 142 to 145 (TKAD), and 173 to 175 (FSA). Mg(2+) contacts are provided by Ser37 and Thr59.

Belongs to the TRAFAC class TrmE-Era-EngA-EngB-Septin-like GTPase superfamily. EngB GTPase family. Mg(2+) is required as a cofactor.

Necessary for normal cell division and for the maintenance of normal septation. The polypeptide is Probable GTP-binding protein EngB (Thermoanaerobacter pseudethanolicus (strain ATCC 33223 / 39E) (Clostridium thermohydrosulfuricum)).